A 65-amino-acid polypeptide reads, in one-letter code: MNEALLREIYSEVKKIREKIEQLEELIIPAEKVSEEELLEIRKLKEESLKGEHVDWDELKRELGV.

This is an uncharacterized protein from Archaeoglobus fulgidus (strain ATCC 49558 / DSM 4304 / JCM 9628 / NBRC 100126 / VC-16).